The chain runs to 235 residues: Small heat shock protein, chloroplastic (235 aa).

Disordered stretches follow at residues 1–23 (MAYT…TSKI) and 51–80 (TGDN…ERRP). Positions 52–63 (GDNKDTSVDVHH) are enriched in basic and acidic residues. Positions 64–74 (SSAQGGNNQGT) are enriched in polar residues. The 110-residue stretch at 126–235 (SGTGEIRTPW…EKKVIDVQIN (110 aa)) folds into the sHSP domain.

The protein belongs to the small heat shock protein (HSP20) family. As to expression, in fruits, flowers, leaves, and stems.

It is found in the plastid. Its subcellular location is the chloroplast. The sequence is that of Small heat shock protein, chloroplastic (HSP21) from Solanum lycopersicum (Tomato).